Here is a 1245-residue protein sequence, read N- to C-terminus: MLDASGCSWAMWTWALLQLLLLVGPGGCLNRQELFPFGPGQGDLELEAGDDVVSPSLELIGELSFYDRTDITSVYVTTNGIIAMSEPPATEYHPGTFPPSFGSVAPFLADLDTTDGLGNVYYREDLSPFIIQMAAEYVQRGFPEVSFQPTSVVVVTWESVAPYGGPSSSPAEEGKRNTFQAVLASSNSSSYAIFLYPEDGLQFFTTFSKKDESQVPAVVGFSKGLVGFLWKSNGAYNIFANDRESIENLAKSSNAGHQGVWVFEIGSPATAKGVVSADVNLDLDDDGADYEDEDYDLVTSHLGLEDVATPSPSHSPRRGYPDPHNVPRILSPGYEATERPRGVPTERTRSFQLPAERFPQHHPQVIDVDEVEETGVVFSYNTGSQQTCANNRHQCSVHAECRDYATGFCCRCVANYTGNGRQCVAEGSPQRVNGKVKGRIFVGSSQVPVVFENTDLHSYVVMNHGRSYTAISTIPETVGYSLLPLAPIGGIIGWMFAVEQDGFKNGFSITGGEFTRQAEVTFLGHPGKLVLKQQFSGIDEHGHLTISTELEGRVPQIPYGASVHIEPYTELYHYSSSVITSSSTREYTVMEPDQDGAAPSHTHIYQWRQTITFQECAHDDARPALPSTQQLSVDSVFVLYNKEERILRYALSNSIGPVRDGSPDALQNPCYIGTHGCDSNAACRPGPGTQFTCECSIGFRGDGQTCYDIDECSEQPSRCGNHAVCNNLPGTFRCECVEGYHFSDRGTCVAAEDQRPINYCETGLHNCDIPQRAQCIYMGGSSYTCSCLPGFSGDGRACRDVDECQHSRCHPDAFCYNTPGSFTCQCKPGYQGDGFRCMPGEVSKTRCQLEREHILGAAGGADAQRPTLQGMFVPQCDEYGHYVPTQCHHSTGYCWCVDRDGRELEGSRTPPGMRPPCLSTVAPPIHQGPVVPTAVIPLPPGTHLLFAQTGKIERLPLERNTMKKTEAKAFLHIPAKVIIGLAFDCVDKVVYWTDISEPSIGRASLHGGEPTTIIRQDLGSPEGIALDHLGRTIFWTDSQLDRIEVAKMDGTQRRVLFDTGLVNPRGIVTDPVRGNLYWTDWNRDNPKIETSHMDGTNRRILAQDNLGLPNGLTFDAFSSQLCWVDAGTHRAECLNPAQPGRRKVLEGLQYPFAVTSYGKNLYYTDWKTNSVIAMDLAISKEMDTFHPHKQTRLYGITIALSQCPQGHNYCSVNNGGCTHLCLPTPGSRTCRCPDNTLGVDCIERK.

The N-terminal stretch at 1–28 is a signal peptide; it reads MLDASGCSWAMWTWALLQLLLLVGPGGC. Residues 106–268 form the NIDO domain; it reads PFLADLDTTD…GVWVFEIGSP (163 aa). The N-linked (GlcNAc...) asparagine glycan is linked to Asn-187. 2 positions are modified to sulfotyrosine: Tyr-290 and Tyr-295. Thr-299 carries an O-linked (GalNAc...) threonine glycan. The disordered stretch occupies residues 307–344; it reads VATPSPSHSPRRGYPDPHNVPRILSPGYEATERPRGVP. An O-linked (GalNAc...) serine glycan is attached at Ser-331. O-linked (GalNAc...) threonine glycans are attached at residues Thr-337 and Thr-345. Thr-348 is a glycosylation site (O-linked (GalNAc...) threonine; partial). Residues 384-424 enclose the EGF-like 1 domain; that stretch reads SQQTCANNRHQCSVHAECRDYATGFCCRCVANYTGNGRQCV. Intrachain disulfides connect Cys-388–Cys-401, Cys-395–Cys-410, Cys-409–Cys-616, Cys-412–Cys-423, Cys-670–Cys-683, Cys-677–Cys-693, Cys-695–Cys-706, Cys-712–Cys-725, Cys-719–Cys-734, Cys-736–Cys-748, Cys-760–Cys-775, Cys-767–Cys-785, Cys-787–Cys-798, Cys-804–Cys-815, Cys-809–Cys-824, Cys-826–Cys-837, Cys-847–Cys-876, Cys-887–Cys-894, and Cys-896–Cys-917. The N-linked (GlcNAc...) asparagine glycan is linked to Asn-415. The region spanning 428 to 665 is the Nidogen G2 beta-barrel domain; that stretch reads SPQRVNGKVK…GPVRDGSPDA (238 aa). One can recognise an EGF-like 2 domain in the interval 666 to 707; that stretch reads LQNPCYIGTHGCDSNAACRPGPGTQFTCECSIGFRGDGQTCY. The Cell attachment site signature appears at 700 to 702; it reads RGD. An EGF-like 3; calcium-binding domain is found at 708–749; it reads DIDECSEQPSRCGNHAVCNNLPGTFRCECVEGYHFSDRGTCV. The EGF-like 4 domain maps to 756-799; it reads PINYCETGLHNCDIPQRAQCIYMGGSSYTCSCLPGFSGDGRACR. The EGF-like 5; calcium-binding domain maps to 800 to 838; that stretch reads DVDECQHSRCHPDAFCYNTPGSFTCQCKPGYQGDGFRCM. In terms of domain architecture, Thyroglobulin type-1 spans 844–917; the sequence is KTRCQLEREH…RTPPGMRPPC (74 aa). O-linked (GalNAc...) threonine glycosylation is found at Thr-920 and Thr-933. 4 LDL-receptor class B repeats span residues 988–1030, 1031–1073, 1074–1118, and 1119–1160; these read KVVY…DHLG, RTIF…DPVR, GNLY…DAFS, and SQLC…YGKN. The region spanning 1206–1242 is the EGF-like 6 domain; sequence GHNYCSVNNGGCTHLCLPTPGSRTCRCPDNTLGVDCI. Intrachain disulfides connect Cys-1210-Cys-1221, Cys-1217-Cys-1230, and Cys-1232-Cys-1241.

Interacts with FBLN1. Interacts with LGALS3BP. Interacts with PLXDC1. Interacts with SVEP1. In terms of processing, N- and O-glycosylated.

The protein localises to the secreted. It is found in the extracellular space. It localises to the extracellular matrix. Its subcellular location is the basement membrane. Its function is as follows. Sulfated glycoprotein widely distributed in basement membranes and tightly associated with laminin. Also binds to collagen IV and perlecan. It probably has a role in cell-extracellular matrix interactions. The polypeptide is Nidogen-1 (Nid1) (Mus musculus (Mouse)).